A 997-amino-acid polypeptide reads, in one-letter code: Malignant fibrous histiocytoma-amplified sequence 1 homolog (997 aa).

14 LRR repeats span residues 32–53 (SLRQ…ADLG), 54–76 (DVEV…QSLS), 79–100 (NLHV…VYHL), 102–123 (RLTE…VGLL), 125–146 (KLKK…LGML), 148–170 (DLEE…QGLP), 171–192 (SLRT…LFHV), 194–216 (ALEE…IRSM), 218–239 (SLKI…ICEL), 241–262 (NLES…FGAL), 264–286 (KLKM…LQLV), 287–308 (DLEE…ISCM), 310–331 (KLVT…IVEL), and 333–354 (FLEE…FGKL). The Roc domain maps to 393-626 (QPAVKPRLKL…EKLLSVAEHR (234 aa)). The COR domain occupies 637 to 861 (PKSWQMLEEL…RFSVQINSHI (225 aa)).

It localises to the cytoplasm. In terms of biological role, probable GTP-binding protein. Functions in innate immunity and more specifically the inflammatory response as a regulator of the Toll-like receptor TLR2 and TLR4 signaling pathways. This Xenopus tropicalis (Western clawed frog) protein is Malignant fibrous histiocytoma-amplified sequence 1 homolog (mfhas1).